Consider the following 558-residue polypeptide: Putative ABC transporter ATP-binding protein SAG1633 (558 aa).

ABC transporter domains follow at residues Ile-5–Glu-246 and Leu-295–Lys-527. Residues Gly-39–Ser-46 and Gly-328–Ser-335 contribute to the ATP site.

The protein belongs to the ABC transporter superfamily.

It is found in the cell membrane. Functionally, probably part of an ABC transporter complex. Responsible for energy coupling to the transport system. This is Putative ABC transporter ATP-binding protein SAG1633 from Streptococcus agalactiae serotype V (strain ATCC BAA-611 / 2603 V/R).